The chain runs to 143 residues: UPF0306 protein plu4501 (143 aa).

It belongs to the UPF0306 family.

This Photorhabdus laumondii subsp. laumondii (strain DSM 15139 / CIP 105565 / TT01) (Photorhabdus luminescens subsp. laumondii) protein is UPF0306 protein plu4501.